A 185-amino-acid chain; its full sequence is NEDD8-conjugating enzyme UBE2F (185 aa).

Residues 1-29 (MLTLASKLKRDDGVKGSRTSSTTSDSTRR) form a disordered region. The tract at residues 1–29 (MLTLASKLKRDDGVKGSRTSSTTSDSTRR) is interaction with uba3. Residues 32 to 185 (VRDRLLVKEV…VEDYIKRYAR (154 aa)) enclose the UBC core domain. Residue Cys116 is the Glycyl thioester intermediate of the active site.

This sequence belongs to the ubiquitin-conjugating enzyme family. UBE2F subfamily.

It catalyses the reaction [E1 NEDD8-activating enzyme]-S-[NEDD8 protein]-yl-L-cysteine + [E2 NEDD8-conjugating enzyme]-L-cysteine = [E1 NEDD8-activating enzyme]-L-cysteine + [E2 NEDD8-conjugating enzyme]-S-[NEDD8-protein]-yl-L-cysteine.. It participates in protein modification; protein neddylation. Functionally, accepts the ubiquitin-like protein NEDD8 from the UBA3-NAE1 E1 complex and catalyzes its covalent attachment to other proteins. Together with the E3 ubiquitin ligase rnf7/rbx2, specifically neddylates cullin-5 (cul5). Does not neddylate cul1, cul2, cul3, cul4a or cul4b. The polypeptide is NEDD8-conjugating enzyme UBE2F (ube2f) (Xenopus tropicalis (Western clawed frog)).